The following is an 88-amino-acid chain: Large ribosomal subunit protein bL27 (88 aa).

A disordered region spans residues M1–V23.

The protein belongs to the bacterial ribosomal protein bL27 family.

The protein is Large ribosomal subunit protein bL27 of Synechococcus sp. (strain CC9902).